The sequence spans 480 residues: Alkaline nuclease (480 aa).

The protein belongs to the herpesviridae alkaline nuclease family. Interacts with major DNA-binding protein; this interaction increases the nuclease processivity of the alkaline exonuclease.

The protein localises to the host nucleus. It is found in the host cytoplasm. Its function is as follows. Plays a role in processing non linear or branched viral DNA intermediates in order to promote the production of mature packaged unit-length linear progeny viral DNA molecules. Exhibits endonuclease and exonuclease activities and accepts both double-stranded and single-stranded DNA as substrate. Exonuclease digestion of DNA is in the 5'-&gt; 3' direction and the products are 5'-monophosphate nucleosides. Additionally, forms a recombinase with the major DNA-binding protein, which displays strand exchange activity. This is Alkaline nuclease (U70) from Homo sapiens (Human).